The primary structure comprises 286 residues: ATP synthase gamma chain (286 aa).

This sequence belongs to the ATPase gamma chain family. As to quaternary structure, F-type ATPases have 2 components, CF(1) - the catalytic core - and CF(0) - the membrane proton channel. CF(1) has five subunits: alpha(3), beta(3), gamma(1), delta(1), epsilon(1). CF(0) has three main subunits: a, b and c.

The protein resides in the cell inner membrane. Functionally, produces ATP from ADP in the presence of a proton gradient across the membrane. The gamma chain is believed to be important in regulating ATPase activity and the flow of protons through the CF(0) complex. This chain is ATP synthase gamma chain, found in Shewanella loihica (strain ATCC BAA-1088 / PV-4).